The chain runs to 561 residues: Potassium-transporting ATPase potassium-binding subunit (561 aa).

10 helical membrane-spanning segments follow: residues 4-24 (IVMQ…PLGI), 65-85 (AVSV…VLML), 133-153 (IGLT…LFAV), 177-197 (LYIL…QGVV), 253-273 (FTNL…VVMF), 285-305 (AIMT…TISE), 380-400 (GLYG…LLVG), 417-437 (MVCL…AVAV), 484-504 (MVGA…ALYL), and 528-548 (FIGL…LPAL).

Belongs to the KdpA family. The system is composed of three essential subunits: KdpA, KdpB and KdpC.

It localises to the cell membrane. Its function is as follows. Part of the high-affinity ATP-driven potassium transport (or Kdp) system, which catalyzes the hydrolysis of ATP coupled with the electrogenic transport of potassium into the cytoplasm. This subunit binds the extracellular potassium ions and delivers the ions to the membrane domain of KdpB through an intramembrane tunnel. The polypeptide is Potassium-transporting ATPase potassium-binding subunit (Listeria monocytogenes serovar 1/2a (strain ATCC BAA-679 / EGD-e)).